We begin with the raw amino-acid sequence, 94 residues long: Co-chaperonin GroES (94 aa).

It belongs to the GroES chaperonin family. Heptamer of 7 subunits arranged in a ring. Interacts with the chaperonin GroEL.

Its subcellular location is the cytoplasm. In terms of biological role, together with the chaperonin GroEL, plays an essential role in assisting protein folding. The GroEL-GroES system forms a nano-cage that allows encapsulation of the non-native substrate proteins and provides a physical environment optimized to promote and accelerate protein folding. GroES binds to the apical surface of the GroEL ring, thereby capping the opening of the GroEL channel. This is Co-chaperonin GroES from Caldanaerobacter subterraneus subsp. tengcongensis (strain DSM 15242 / JCM 11007 / NBRC 100824 / MB4) (Thermoanaerobacter tengcongensis).